Here is an 82-residue protein sequence, read N- to C-terminus: uncharacterized protein (82 aa).

The protein localises to the plastid. The protein resides in the chloroplast. This is an uncharacterized protein from Vicia faba (Broad bean).